The chain runs to 193 residues: Large ribosomal subunit protein eL18 (193 aa).

A disordered region spans residues 158 to 193 (HFGAAGVPGSHAKPHVSSRGKERQRSSKRRHAFRHK). Basic residues predominate over residues 183-193 (SSKRRHAFRHK).

This sequence belongs to the eukaryotic ribosomal protein eL18 family.

The protein resides in the cytoplasm. The sequence is that of Large ribosomal subunit protein eL18 (RPL18-A) from Trypanosoma brucei brucei (strain 927/4 GUTat10.1).